Here is a 194-residue protein sequence, read N- to C-terminus: uncharacterized protein (194 aa).

The tract at residues 25-156 (PSWACRRGGP…ESPLGTLPCS (132 aa)) is disordered. Positions 43-57 (GPSTVPVTPTAGSCQ) are enriched in polar residues. The segment covering 104–113 (SSSPGPSFHL) has biased composition (low complexity).

This is an uncharacterized protein from Homo sapiens (Human).